The following is a 258-amino-acid chain: Imidazole glycerol phosphate synthase subunit HisF (258 aa).

Catalysis depends on residues Asp11 and Asp130.

The protein belongs to the HisA/HisF family. Heterodimer of HisH and HisF.

Its subcellular location is the cytoplasm. It catalyses the reaction 5-[(5-phospho-1-deoxy-D-ribulos-1-ylimino)methylamino]-1-(5-phospho-beta-D-ribosyl)imidazole-4-carboxamide + L-glutamine = D-erythro-1-(imidazol-4-yl)glycerol 3-phosphate + 5-amino-1-(5-phospho-beta-D-ribosyl)imidazole-4-carboxamide + L-glutamate + H(+). Its pathway is amino-acid biosynthesis; L-histidine biosynthesis; L-histidine from 5-phospho-alpha-D-ribose 1-diphosphate: step 5/9. In terms of biological role, IGPS catalyzes the conversion of PRFAR and glutamine to IGP, AICAR and glutamate. The HisF subunit catalyzes the cyclization activity that produces IGP and AICAR from PRFAR using the ammonia provided by the HisH subunit. This Serratia proteamaculans (strain 568) protein is Imidazole glycerol phosphate synthase subunit HisF.